Here is a 116-residue protein sequence, read N- to C-terminus: MLQYIPLSNLPYSHIPLHHPSLTISTKCTRIIMHGTCLSGLYPVPFTHNSHDYPHFNIYISFGGPKYCITALNTYVIPLLHRILTTQFIYTYANITKKSPLKSPKHKNILFFNHNT.

This sequence belongs to the UPF0320 family.

The chain is Putative UPF0320 protein YJR162C from Saccharomyces cerevisiae (strain ATCC 204508 / S288c) (Baker's yeast).